The sequence spans 109 residues: Nucleoid-associated protein MS1507 (109 aa).

The interval 1 to 21 is disordered; sequence MFGKGGLGNLMKQAQQMQERM.

It belongs to the YbaB/EbfC family. Homodimer.

The protein resides in the cytoplasm. It is found in the nucleoid. Functionally, binds to DNA and alters its conformation. May be involved in regulation of gene expression, nucleoid organization and DNA protection. The sequence is that of Nucleoid-associated protein MS1507 from Mannheimia succiniciproducens (strain KCTC 0769BP / MBEL55E).